The sequence spans 507 residues: Ribosomal protein uS12 methylthiotransferase RimO (507 aa).

Positions 13 to 124 (RRVALLTLGC…ISDRLGAVLA (112 aa)) constitute an MTTase N-terminal domain. The [4Fe-4S] cluster site is built by cysteine 22, cysteine 58, and cysteine 87. The segment at 150-175 (AAVSLPGHGTRAAAAGPGGRSAPVEV) is disordered. Low complexity predominate over residues 155–172 (PGHGTRAAAAGPGGRSAP). Positions 191–422 (LDTGPVASLK…ALADELCAQR (232 aa)) constitute a Radical SAM core domain. 3 residues coordinate [4Fe-4S] cluster: cysteine 205, cysteine 209, and cysteine 212. Residues 424–497 (EQRLGSTVQV…GVDLVAVPDG (74 aa)) enclose the TRAM domain.

This sequence belongs to the methylthiotransferase family. RimO subfamily. Requires [4Fe-4S] cluster as cofactor.

It localises to the cytoplasm. It catalyses the reaction L-aspartate(89)-[ribosomal protein uS12]-hydrogen + (sulfur carrier)-SH + AH2 + 2 S-adenosyl-L-methionine = 3-methylsulfanyl-L-aspartate(89)-[ribosomal protein uS12]-hydrogen + (sulfur carrier)-H + 5'-deoxyadenosine + L-methionine + A + S-adenosyl-L-homocysteine + 2 H(+). In terms of biological role, catalyzes the methylthiolation of an aspartic acid residue of ribosomal protein uS12. The protein is Ribosomal protein uS12 methylthiotransferase RimO of Salinispora arenicola (strain CNS-205).